We begin with the raw amino-acid sequence, 248 residues long: Probable transcriptional regulatory protein NGR_c27950 (248 aa).

This sequence belongs to the TACO1 family.

It localises to the cytoplasm. This is Probable transcriptional regulatory protein NGR_c27950 from Sinorhizobium fredii (strain NBRC 101917 / NGR234).